We begin with the raw amino-acid sequence, 396 residues long: Pyridinium-3,5-bisthiocarboxylic acid mononucleotide nickel insertion protein (396 aa).

Belongs to the LarC family.

The catalysed reaction is Ni(II)-pyridinium-3,5-bisthiocarboxylate mononucleotide = pyridinium-3,5-bisthiocarboxylate mononucleotide + Ni(2+). Involved in the biosynthesis of a nickel-pincer cofactor ((SCS)Ni(II) pincer complex). Binds Ni(2+), and functions in nickel delivery to pyridinium-3,5-bisthiocarboxylic acid mononucleotide (P2TMN), to form the mature cofactor. Is thus probably required for the activation of nickel-pincer cofactor-dependent enzymes. This Moorella thermoacetica (strain ATCC 39073 / JCM 9320) protein is Pyridinium-3,5-bisthiocarboxylic acid mononucleotide nickel insertion protein.